Here is a 348-residue protein sequence, read N- to C-terminus: Large ribosomal subunit protein uL3m (348 aa).

A mitochondrion-targeting transit peptide spans 1-40; sequence MPGWRLLAWAGARVLDRGTGGLGTALGSGNRTDICVLVRS.

It belongs to the universal ribosomal protein uL3 family. In terms of assembly, component of the mitochondrial ribosome large subunit (39S) which comprises a 16S rRNA and about 50 distinct proteins.

The protein localises to the mitochondrion. In Bos taurus (Bovine), this protein is Large ribosomal subunit protein uL3m (MRPL3).